The primary structure comprises 212 residues: Putative inactive 6-phospho-alpha-glucosidase (212 aa).

Phe-4–Asp-70 is an NAD(+) binding site. Residues Cys-169 and His-200 each coordinate Mn(2+).

It belongs to the glycosyl hydrolase 4 family.

This Escherichia coli (strain K12) protein is Putative inactive 6-phospho-alpha-glucosidase.